Consider the following 869-residue polypeptide: Dimethylglycine dehydrogenase, mitochondrial (869 aa).

A mitochondrion-targeting transit peptide spans 1–43 (MLRPGALRLRGLALRGSPRRPSSAGLREGQESPASPPEWKDRA). The tract at residues 14–39 (LRGSPRRPSSAGLREGQESPASPPEW) is disordered. FAD contacts are provided by residues 52–53 (CV), 73–74 (EK), and 80–88 (GSTWHAAGL). His84 bears the Tele-8alpha-FAD histidine mark. Lys107 is modified (N6-acetyllysine). Lys141 carries the N6-acetyllysine; alternate modification. Lys141 is modified (N6-succinyllysine; alternate). Lys161 carries the post-translational modification N6-acetyllysine. Val212 is an FAD binding site. The residue at position 216 (Lys216) is an N6-acetyllysine. Trp244 is a binding site for FAD. N6-succinyllysine is present on residues Lys310 and Lys312. N6-acetyllysine occurs at positions 328 and 353. FAD is bound at residue 390–395 (FGYGII). N6-acetyllysine; alternate is present on residues Lys427, Lys469, and Lys516. An N6-succinyllysine; alternate mark is found at Lys427, Lys469, and Lys516. 573–575 (ELT) provides a ligand contact to (6S)-5,6,7,8-tetrahydrofolate. Lys648 carries the post-translational modification N6-acetyllysine; alternate. Lys648 bears the N6-succinyllysine; alternate mark. Residues Tyr669, 676–678 (ELY), and Tyr737 contribute to the (6S)-5,6,7,8-tetrahydrofolate site. N6-acetyllysine is present on Lys757. Lys786 is modified (N6-acetyllysine; alternate). The residue at position 786 (Lys786) is an N6-succinyllysine; alternate. Lys788 carries the post-translational modification N6-succinyllysine.

This sequence belongs to the GcvT family. FAD is required as a cofactor.

Its subcellular location is the mitochondrion. It catalyses the reaction (6S)-5,6,7,8-tetrahydrofolyl-(gamma-L-Glu)(n) + N,N-dimethylglycine + oxidized [electron-transfer flavoprotein] + H(+) = (6R)-5,10-methylenetetrahydrofolyl-(gamma-L-Glu)(n) + sarcosine + reduced [electron-transfer flavoprotein]. It participates in amine and polyamine degradation; betaine degradation; sarcosine from betaine: step 2/2. Catalyzes the demethylation of N,N-dimethylglycine to sarcosine. Also has activity with sarcosine in vitro. This chain is Dimethylglycine dehydrogenase, mitochondrial (Dmgdh), found in Mus musculus (Mouse).